A 36-amino-acid chain; its full sequence is Photosystem I reaction center subunit VIII (36 aa).

The helical transmembrane segment at 9–29 (ILVPLVGLVFPAVTMASLFLY) threads the bilayer.

The protein belongs to the PsaI family.

Its subcellular location is the plastid. The protein resides in the chloroplast thylakoid membrane. Functionally, may help in the organization of the PsaL subunit. The sequence is that of Photosystem I reaction center subunit VIII from Staurastrum punctulatum (Green alga).